The sequence spans 531 residues: Basal body-orientation factor 1 (531 aa).

Residues 1-19 are compositionally biased toward basic residues; sequence MPKLKVKAGKGKKGKRKKA. Residues 1–32 are disordered; the sequence is MPKLKVKAGKGKKGKRKKAGKNEHRLDKESEV. Positions 20–32 are enriched in basic and acidic residues; the sequence is GKNEHRLDKESEV. Coiled coils occupy residues 26 to 213 and 274 to 365; these read LDKE…AEKA and VQEK…VESF. Positions 465–505 are disordered; that stretch reads QSRKSPGLKPSPPADVSSIKEKEINTSNLEEKPEESSSTFI. A compositionally biased stretch (basic and acidic residues) spans 482–499; the sequence is SIKEKEINTSNLEEKPEE.

This sequence belongs to the BBOF1 family. In terms of tissue distribution, multiciliated cells.

The protein resides in the cytoplasm. The protein localises to the cytoskeleton. Its subcellular location is the cilium basal body. Basal body protein required in multiciliate cells to align and maintain cilia orientation in response to flow. May act by mediating a maturation step that stabilizes and aligns cilia orientation. Not required to respond to planar cell polarity (PCP) or flow-based orientation cues. This is Basal body-orientation factor 1 (ccdc176) from Xenopus laevis (African clawed frog).